A 154-amino-acid chain; its full sequence is Ribonuclease H (154 aa).

The region spanning 1 to 142 is the RNase H type-1 domain; sequence MQKQIEIFTD…CDELAKKGAE (142 aa). Residues Asp-10, Glu-48, Asp-70, and Asp-134 each coordinate Mg(2+).

It belongs to the RNase H family. As to quaternary structure, monomer. Requires Mg(2+) as cofactor.

Its subcellular location is the cytoplasm. The catalysed reaction is Endonucleolytic cleavage to 5'-phosphomonoester.. Functionally, endonuclease that specifically degrades the RNA of RNA-DNA hybrids. The chain is Ribonuclease H from Haemophilus influenzae (strain 86-028NP).